A 114-amino-acid polypeptide reads, in one-letter code: Large ribosomal subunit protein bL19 (114 aa).

The protein belongs to the bacterial ribosomal protein bL19 family.

This protein is located at the 30S-50S ribosomal subunit interface and may play a role in the structure and function of the aminoacyl-tRNA binding site. This Thermobifida fusca (strain YX) protein is Large ribosomal subunit protein bL19.